A 280-amino-acid chain; its full sequence is 4-deoxy-L-threo-5-hexosulose-uronate ketol-isomerase 1 (280 aa).

The Zn(2+) site is built by H198, H200, E205, and H247.

Belongs to the KduI family. Zn(2+) serves as cofactor.

The enzyme catalyses 5-dehydro-4-deoxy-D-glucuronate = 3-deoxy-D-glycero-2,5-hexodiulosonate. Its pathway is glycan metabolism; pectin degradation; 2-dehydro-3-deoxy-D-gluconate from pectin: step 4/5. Catalyzes the isomerization of 5-dehydro-4-deoxy-D-glucuronate to 3-deoxy-D-glycero-2,5-hexodiulosonate. This is 4-deoxy-L-threo-5-hexosulose-uronate ketol-isomerase 1 (kduI1) from Rhizobium meliloti (strain 1021) (Ensifer meliloti).